The primary structure comprises 130 residues: 3-aminoacrylate deaminase RutC (130 aa).

This sequence belongs to the RutC family.

It catalyses the reaction (Z)-3-aminoacrylate + H2O + H(+) = 3-oxopropanoate + NH4(+). Involved in pyrimidine catabolism. Catalyzes the deamination of 3-aminoacrylate to malonic semialdehyde, a reaction that can also occur spontaneously. RutC may facilitate the reaction and modulate the metabolic fitness, rather than catalyzing essential functions. This is 3-aminoacrylate deaminase RutC from Klebsiella variicola (strain At-22).